A 265-amino-acid chain; its full sequence is Aquaporin-5 (265 aa).

Over 1 to 12 (MKKEVCSVAFLK) the chain is Cytoplasmic. The helical transmembrane segment at 13-33 (AVFAEFLATLIFVFFGLGSAL) threads the bilayer. Over 34–39 (KWPSAL) the chain is Extracellular. The helical transmembrane segment at 40–60 (PTILQIALAFGLAIGTLAQAL) threads the bilayer. The Cytoplasmic segment spans residues 61 to 65 (GPVSG). The discontinuously helical intramembrane region spans 66–74 (GHINPAITL). Residues 69–71 (NPA) carry the NPA 1 motif. Residues 75-87 (ALLVGNQISLLRA) lie on the Cytoplasmic side of the membrane. The chain crosses the membrane as a helical span at residues 88-108 (FFYVAAQLVGAIAGAGILYGV). Topologically, residues 109-126 (APLNARGNLAVNALNNNT) are extracellular. Residues N124 and N125 are each glycosylated (N-linked (GlcNAc...) asparagine). The chain crosses the membrane as a helical span at residues 127–147 (TQGQAMVVELILTFQLALCIF). Residues 148–158 (ASTDSRRTSPV) lie on the Cytoplasmic side of the membrane. Residues 159–179 (GSPALSIGLSVTLGHLVGIYF) traverse the membrane as a helical segment. A topological domain (extracellular) is located at residue T180. Residues 181–191 (GCSMNPARSFG) constitute an intramembrane region (discontinuously helical). Residues 185-187 (NPA) carry the NPA 2 motif. The Extracellular portion of the chain corresponds to 192–203 (PAVVMNRFSPAH). A helical transmembrane segment spans residues 204–224 (WVFWVGPIVGAVLAAILYFYL). Residues 225–265 (LFPNSLSLSERVAIIKGTYEPDEDWEEQREERKKTMELTTR) are Cytoplasmic-facing.

This sequence belongs to the MIP/aquaporin (TC 1.A.8) family. Homotetramer; each monomer provides an independent water pore. Interacts with TRPV4; the interaction is probably indirect and regulates TRPV4 activation by hypotonicity. As to expression, detected in skin eccrine sweat glands, at the apical cell membrane and at intercellular canaliculi (at protein level).

It is found in the apical cell membrane. It localises to the cell membrane. The protein localises to the cytoplasmic vesicle membrane. The enzyme catalyses H2O(in) = H2O(out). Aquaporins form homotetrameric transmembrane channels, with each monomer independently mediating water transport across the plasma membrane along its osmotic gradient. Plays an important role in fluid secretion in salivary glands. Required for TRPV4 activation by hypotonicity. Together with TRPV4, controls regulatory volume decrease in salivary epithelial cells. Seems to play a redundant role in water transport in the eye, lung and in sweat glands. The polypeptide is Aquaporin-5 (Homo sapiens (Human)).